The primary structure comprises 541 residues: Glucose-6-phosphate isomerase (541 aa).

The active-site Proton donor is the glutamate 346. Residues histidine 377 and lysine 506 contribute to the active site.

It belongs to the GPI family.

The protein resides in the cytoplasm. It carries out the reaction alpha-D-glucose 6-phosphate = beta-D-fructose 6-phosphate. It functions in the pathway carbohydrate biosynthesis; gluconeogenesis. It participates in carbohydrate degradation; glycolysis; D-glyceraldehyde 3-phosphate and glycerone phosphate from D-glucose: step 2/4. In terms of biological role, catalyzes the reversible isomerization of glucose-6-phosphate to fructose-6-phosphate. This chain is Glucose-6-phosphate isomerase, found in Rhizobium etli (strain CIAT 652).